The primary structure comprises 286 residues: MAGAKEIRSKIASIKSTQKITSAMEKVAVSKMRKAQMRMAASRPYAERIRQVIGHLANANPEYRHPFMIERPVKRAGYIVVSSDRGLCGGLNTNLFKALVKDMSANREQGVEIDLCVIGSKGATFFRIFGGNVVAAISHLGEEPSINDLIGSVKVMLDAYLDGRIDRLSVVSNKFINTMTQKPTVEQLVPLVATPDQDLKHHWDYLYEPDAKELLDGLMVRYVESQVYQAVVENNAAEQAARMIAMKNATDNAGDLIKELQLIYNKARQAAITQEISEIVGGAAAV.

It belongs to the ATPase gamma chain family. In terms of assembly, F-type ATPases have 2 components, CF(1) - the catalytic core - and CF(0) - the membrane proton channel. CF(1) has five subunits: alpha(3), beta(3), gamma(1), delta(1), epsilon(1). CF(0) has three main subunits: a, b and c.

The protein resides in the cell inner membrane. In terms of biological role, produces ATP from ADP in the presence of a proton gradient across the membrane. The gamma chain is believed to be important in regulating ATPase activity and the flow of protons through the CF(0) complex. The sequence is that of ATP synthase gamma chain from Pseudomonas putida (strain ATCC 700007 / DSM 6899 / JCM 31910 / BCRC 17059 / LMG 24140 / F1).